A 468-amino-acid chain; its full sequence is Phosphatidylinositol-binding clathrin assembly protein LAP (468 aa).

Residues 16–158 form the ENTH domain; the sequence is RHSLAGQGLA…LSYRAMAFDF (143 aa). The segment at 438-468 is disordered; it reads NAGDGTAKYDGGAGSSPFDWGATDDDGGAAQ. The segment covering 459–468 has biased composition (acidic residues); that stretch reads ATDDDGGAAQ.

Belongs to the PICALM/SNAP91 family. Binds clathrin and phosphatidylinositol 4,5-bisphosphate. In terms of tissue distribution, in embryos, expression is seen in central and peripheral nervous systems (brain and ventral nerve cord) and Garland cells. Coexpressed with clathrin at presynaptic boutons of neuromuscular junctions.

The protein resides in the membrane. Its subcellular location is the clathrin-coated pit. The protein localises to the golgi apparatus. It localises to the cytoplasmic vesicle. It is found in the clathrin-coated vesicle. In terms of biological role, assembly protein recruiting clathrin and adaptor protein complex 2 (AP2) to cell membranes at sites of coated-pit formation and clathrin-vesicle assembly. May be required to determine the amount of membrane to be recycled, possibly by regulating the size of the clathrin cage. Involved in AP2-dependent clathrin-mediated endocytosis at the neuromuscular junction. This Drosophila melanogaster (Fruit fly) protein is Phosphatidylinositol-binding clathrin assembly protein LAP (lap).